The chain runs to 775 residues: Mitochondrial intermediate peptidase (775 aa).

Residues 1 to 28 constitute a mitochondrion transit peptide; sequence MIARPARDVLSSATKKQFRFRGCLAARH. H558 contacts Zn(2+). Residue E559 is part of the active site. Positions 562 and 565 each coordinate Zn(2+).

The protein belongs to the peptidase M3 family. The cofactor is Zn(2+).

Its subcellular location is the mitochondrion matrix. The catalysed reaction is Release of an N-terminal octapeptide as second stage of processing of some proteins imported into the mitochondrion.. In terms of biological role, cleaves proteins, imported into the mitochondrion, to their mature size. While most mitochondrial precursor proteins are processed to the mature form in one step by mitochondrial processing peptidase (MPP), the sequential cleavage by MIP of an octapeptide after initial processing by MPP is a required step for a subgroup of nuclear-encoded precursor proteins destined for the matrix or the inner membrane. This chain is Mitochondrial intermediate peptidase (OCT1), found in Schizophyllum commune (Split gill fungus).